A 260-amino-acid polypeptide reads, in one-letter code: Ribonuclease 3 (260 aa).

The region spanning 16 to 145 (VQLLESRLGL…VFGAVFLTSG (130 aa)) is the RNase III domain. E58 contributes to the Mg(2+) binding site. The active site involves D62. Positions 131 and 134 each coordinate Mg(2+). E134 is a catalytic residue. In terms of domain architecture, DRBM spans 172-241 (DYKTLLQEMA…AQATLEKLRE (70 aa)). Residues 219 to 260 (ATGRSKKEAEQSAAQATLEKLREDAACPTSPPPGTPRHDTPA) form a disordered region.

The protein belongs to the ribonuclease III family. In terms of assembly, homodimer. It depends on Mg(2+) as a cofactor.

Its subcellular location is the cytoplasm. It carries out the reaction Endonucleolytic cleavage to 5'-phosphomonoester.. Its function is as follows. Digests double-stranded RNA. Involved in the processing of primary rRNA transcript to yield the immediate precursors to the large and small rRNAs (23S and 16S). Processes some mRNAs, and tRNAs when they are encoded in the rRNA operon. Processes pre-crRNA and tracrRNA of type II CRISPR loci if present in the organism. This is Ribonuclease 3 from Myxococcus xanthus (strain DK1622).